Here is a 193-residue protein sequence, read N- to C-terminus: MKASTVLQIAYLVSQESKCCSWKVGAVIEKNGRIISTGYNGSPAGGVNCCDYAAEQGWLLNKPKHAIIQGHKPECVSFGSTDRFVLAKEHRSAHSEWSSKNEIHAELNAILFAARNGSSIEGATMYVTLSPCPDCAKAIAQSGIKKLVYCETYDKNKPGWDDILRNAGIEVFNVPKKNLNKLNWENINEFCGE.

The CMP/dCMP-type deaminase domain maps to 1–171; the sequence is MKASTVLQIA…DILRNAGIEV (171 aa). Zn(2+) contacts are provided by Cys-19, Cys-49, His-94, Glu-102, and His-104. Glu-106 functions as the Proton donor in the catalytic mechanism. Residues Cys-132 and Cys-135 each contribute to the Zn(2+) site. Tyr-153 is a substrate binding site.

It belongs to the cytidine and deoxycytidylate deaminase family. Homohexamer. Zn(2+) is required as a cofactor.

The enzyme catalyses dCMP + H2O + H(+) = dUMP + NH4(+). Allosteric enzyme whose activity is greatly influenced by the end products of its metabolic pathway, dCTP and dTTP. In terms of biological role, supplies the nucleotide substrate for thymidylate synthetase. In Escherichia coli (Bacteriophage T4), this protein is Deoxycytidylate deaminase (CD).